We begin with the raw amino-acid sequence, 196 residues long: Glutathione-specific gamma-glutamylcyclotransferase 1 (196 aa).

Substrate is bound at residue 15-20 (IFGYGS). The active-site Proton acceptor is the Glu95.

This sequence belongs to the gamma-glutamylcyclotransferase family. ChaC subfamily.

Its subcellular location is the cytoplasm. It localises to the cytosol. The protein localises to the golgi apparatus. The protein resides in the trans-Golgi network. It catalyses the reaction glutathione = L-cysteinylglycine + 5-oxo-L-proline. Its function is as follows. Catalyzes the cleavage of glutathione into 5-oxo-L-proline and a Cys-Gly dipeptide. Acts specifically on glutathione, but not on other gamma-glutamyl peptides. Glutathione depletion is an important factor for apoptosis initiation and execution. Acts as a pro-apoptotic component of the unfolded protein response pathway by mediating the pro-apoptotic effects of the ATF4-ATF3-DDIT3/CHOP cascade. Negative regulator of Notch signaling pathway involved in embryonic neurogenesis: acts by inhibiting Notch cleavage by furin, maintaining Notch in an immature inactive form, thereby promoting neurogenesis in embryos. This is Glutathione-specific gamma-glutamylcyclotransferase 1 from Danio rerio (Zebrafish).